Reading from the N-terminus, the 642-residue chain is tRNA uridine 5-carboxymethylaminomethyl modification enzyme MnmG (642 aa).

FAD-binding positions include 10-15 (GAGHAG), Val-122, and Ser-177. 269-283 (SARYCPSLEDKVMRF) serves as a coordination point for NAD(+). Residue Gln-366 coordinates FAD.

It belongs to the MnmG family. In terms of assembly, homodimer. Heterotetramer of two MnmE and two MnmG subunits. It depends on FAD as a cofactor.

It is found in the cytoplasm. In terms of biological role, NAD-binding protein involved in the addition of a carboxymethylaminomethyl (cmnm) group at the wobble position (U34) of certain tRNAs, forming tRNA-cmnm(5)s(2)U34. The protein is tRNA uridine 5-carboxymethylaminomethyl modification enzyme MnmG of Syntrophobacter fumaroxidans (strain DSM 10017 / MPOB).